A 600-amino-acid chain; its full sequence is Threonine dehydratase, mitochondrial (600 aa).

N6-(pyridoxal phosphate)lysine is present on K144. ACT-like domains are found at residues 425–497 (VFLS…DISD) and 519–590 (RLYR…DETN).

The protein belongs to the serine/threonine dehydratase family. Homotetramer. It depends on pyridoxal 5'-phosphate as a cofactor.

It localises to the mitochondrion. Its subcellular location is the cytoplasm. The catalysed reaction is L-threonine = 2-oxobutanoate + NH4(+). The protein operates within amino-acid biosynthesis; L-isoleucine biosynthesis; 2-oxobutanoate from L-threonine: step 1/1. Isoleucine allosterically inhibits while valine allosterically activates this enzyme. The sequence is that of Threonine dehydratase, mitochondrial from Schizosaccharomyces pombe (strain 972 / ATCC 24843) (Fission yeast).